The primary structure comprises 260 residues: DNA-directed RNA polymerase subunit Rpo3 (260 aa).

This sequence belongs to the archaeal Rpo3/eukaryotic RPB3 RNA polymerase subunit family. In terms of assembly, part of the RNA polymerase complex.

The protein localises to the cytoplasm. It catalyses the reaction RNA(n) + a ribonucleoside 5'-triphosphate = RNA(n+1) + diphosphate. DNA-dependent RNA polymerase (RNAP) catalyzes the transcription of DNA into RNA using the four ribonucleoside triphosphates as substrates. The sequence is that of DNA-directed RNA polymerase subunit Rpo3 from Pyrobaculum aerophilum (strain ATCC 51768 / DSM 7523 / JCM 9630 / CIP 104966 / NBRC 100827 / IM2).